We begin with the raw amino-acid sequence, 125 residues long: Large ribosomal subunit protein eL8 (125 aa).

This sequence belongs to the eukaryotic ribosomal protein eL8 family. Part of the 50S ribosomal subunit. Probably part of the RNase P complex.

The protein resides in the cytoplasm. Functionally, multifunctional RNA-binding protein that recognizes the K-turn motif in ribosomal RNA, the RNA component of RNase P, box H/ACA, box C/D and box C'/D' sRNAs. This chain is Large ribosomal subunit protein eL8, found in Metallosphaera sedula (strain ATCC 51363 / DSM 5348 / JCM 9185 / NBRC 15509 / TH2).